The following is a 249-amino-acid chain: Bax inhibitor 1 (249 aa).

6 consecutive transmembrane segments (helical) span residues 39-59 (LVYL…YLHV), 65-85 (GMLT…VPVF), 93-113 (ILLA…KLAV), 119-139 (ILVT…CAAI), 151-171 (GLLS…SIFG), and 213-233 (HALT…VIML).

This sequence belongs to the BI1 family. As to expression, ubiquitous.

It is found in the membrane. Functionally, suppressor of apoptosis. This is Bax inhibitor 1 (BI1) from Oryza sativa subsp. japonica (Rice).